The chain runs to 532 residues: L-proline--[L-prolyl-carrier protein] ligase (532 aa).

Residues 510–532 (KTDYRRLGLDAPPRPAAPLGTAR) are disordered.

It belongs to the ATP-dependent AMP-binding enzyme family.

The catalysed reaction is holo-[peptidyl-carrier protein] + L-proline + ATP = L-prolyl-[peptidyl-carrier protein] + AMP + diphosphate. Involved in the biosynthesis of undecylprodigiosin. Catalyzes the conversion of L-proline to L-prolyl-AMP and the transfer of the L-prolyl group to acyl carrier protein RedO. This chain is L-proline--[L-prolyl-carrier protein] ligase, found in Streptomyces coelicolor (strain ATCC BAA-471 / A3(2) / M145).